The chain runs to 200 residues: MASIAIENAEPVPSDCKGDLKISKFDGDLPLKVLYCGVCSLPTEYCEYMPDVAKCRQWLEKNFPDEFSKLTLGISPKQETGTVEGQATSGEEEEKKKQKRGGRGQIKQKKKTVPQKVTIAKIPRAKKKYVTRVCGLATFEIELKDAQRFFAQKFSCGASVTGEDEIIIQGDFTDDIIDVIQEKWPEVDDDSIEDLGEVKK.

Residues 78–89 are compositionally biased toward polar residues; that stretch reads QETGTVEGQATS. Residues 78 to 112 form a disordered region; sequence QETGTVEGQATSGEEEEKKKQKRGGRGQIKQKKKT. Residues 97–112 are compositionally biased toward basic residues; it reads KQKRGGRGQIKQKKKT. Residues 117 to 184 form the SUI1 domain; it reads VTIAKIPRAK…DIIDVIQEKW (68 aa).

Belongs to the DENR family.

In terms of biological role, may be involved in the translation of target mRNAs by scanning and recognition of the initiation codon. Involved in translation initiation; promotes recruitment of aminoacetyled initiator tRNA to P site of 40S ribosomes. Can promote release of deacylated tRNA and mRNA from recycled 40S subunits following ABCE1-mediated dissociation of post-termination ribosomal complexes into subunits. The chain is Density-regulated protein (denr) from Xenopus tropicalis (Western clawed frog).